Reading from the N-terminus, the 617-residue chain is Dopamine beta-hydroxylase (617 aa).

Residues M1 to R16 lie on the Cytoplasmic side of the membrane. The helical; Signal-anchor for type II membrane protein transmembrane segment at E17 to L37 threads the bilayer. Topologically, residues Q38–G617 are intragranular. Residues G57–L173 enclose the DOMON domain. A glycan (N-linked (GlcNAc...) asparagine) is linked at N64. Disulfide bonds link C154/C596, C232/C283, C269/C295, C390/C503, C394/C565, and C466/C488. N184 carries N-linked (GlcNAc...) (complex) asparagine glycosylation. The active site involves Y230. H262 and H263 together coordinate Cu(2+). H333 contributes to the Cu(2+) binding site. N-linked (GlcNAc...) asparagine glycosylation occurs at N344. H412 is an active-site residue. Residues H412, H414, and M487 each coordinate Cu(2+). N566 is a glycosylation site (N-linked (GlcNAc...) asparagine). A disordered region spans residues E590 to G617.

This sequence belongs to the copper type II ascorbate-dependent monooxygenase family. Homotetramer; composed of two disulfide-linked dimers. Cu(2+) serves as cofactor. Post-translationally, N-glycosylated. In terms of processing, proteolytic cleavage after the membrane-anchor leads to the release of the soluble form.

The protein resides in the cytoplasmic vesicle. It localises to the secretory vesicle lumen. Its subcellular location is the secretory vesicle. It is found in the chromaffin granule lumen. The protein localises to the secreted. The protein resides in the secretory vesicle membrane. It localises to the chromaffin granule membrane. The enzyme catalyses dopamine + 2 L-ascorbate + O2 = (R)-noradrenaline + 2 monodehydro-L-ascorbate radical + H2O. It functions in the pathway catecholamine biosynthesis; (R)-noradrenaline biosynthesis; (R)-noradrenaline from dopamine: step 1/1. Functionally, catalyzes the hydroxylation of dopamine to noradrenaline (also known as norepinephrine), and is thus vital for regulation of these neurotransmitters. In Homo sapiens (Human), this protein is Dopamine beta-hydroxylase (DBH).